A 545-amino-acid polypeptide reads, in one-letter code: MAAKEVKFGNDARVKMLAGVNILANAVKVTLGPKGRNVVLDKSFGSPVITKDGVSVAREIELEDKFENMGAQMVKEVASKANDAAGDGTTTATVLAQSIVVEGLKAVAAGMNPMDLKRGIDKAVIAAVAELKKLSQECSDTKAIAQVGTISANSDESIGEIIATAMEKVGKEGVITVEEGQALENELEVVEGMQFDRGYLSPYFINKPETGSIELDSPFILLVDKKISNIRELLPILEGLAKTGKPLLIVAEDVEGEALATLVVNNMRGIVKVAAVKAPGFGDRRKAMLQDVAILTGGTVIAEEIGLELEKATLEDLGTAKRVVITKDNTTIIDGSGEHTQITSRVAQIKQQMEDSSSDYDKEKLQERMAKLAGGVAVIKVGAATEVEMKEKKARVEDALHATRAAVEEGVVPGGGVALVRVASMIADIEVLNEDQKHGVVIALRAMEAPLRQIATNAGQEASVVANTVKNGTGNYGYNAGNDTYGDMLEMGILDPTKVTRSALQFAASIAGLMITTEAMIAEIPQESAPDMGGMGGMGGMGGMM.

ATP-binding positions include 30-33 (TLGP), Lys51, 87-91 (DGTTT), Gly415, and Asp495.

The protein belongs to the chaperonin (HSP60) family. As to quaternary structure, forms a cylinder of 14 subunits composed of two heptameric rings stacked back-to-back. Interacts with the co-chaperonin GroES.

Its subcellular location is the cytoplasm. The enzyme catalyses ATP + H2O + a folded polypeptide = ADP + phosphate + an unfolded polypeptide.. Its function is as follows. Together with its co-chaperonin GroES, plays an essential role in assisting protein folding. The GroEL-GroES system forms a nano-cage that allows encapsulation of the non-native substrate proteins and provides a physical environment optimized to promote and accelerate protein folding. The protein is Chaperonin GroEL of Shewanella denitrificans (strain OS217 / ATCC BAA-1090 / DSM 15013).